Here is a 505-residue protein sequence, read N- to C-terminus: Probable cytochrome P450 28a5 (505 aa).

Cysteine 450 contributes to the heme binding site.

The protein belongs to the cytochrome P450 family. Heme is required as a cofactor.

The protein localises to the endoplasmic reticulum membrane. It localises to the microsome membrane. Functionally, may be involved in the metabolism of insect hormones and in the breakdown of synthetic insecticides. In Drosophila melanogaster (Fruit fly), this protein is Probable cytochrome P450 28a5 (Cyp28a5).